The following is a 358-amino-acid chain: L-lysine 3-hydroxylase (358 aa).

H178, E180, and H314 together coordinate Fe cation. R328 contacts 2-oxoglutarate.

Belongs to the clavaminate synthase family. Requires Fe(2+) as cofactor.

The enzyme catalyses L-lysine + 2-oxoglutarate + O2 = (3S)-3-hydroxy-L-lysine + succinate + CO2. Functionally, alpha-ketoglutarate-dependent dioxygenase that in vitro catalyzes the regio- and stereoselective hydroxylation of L-lysine, leading to (3S)-3-hydroxy-L-lysine. Can also use (5R)-5-hydroxy-L-lysine as substrate, but neither D-lysine nor L-ornithine. The protein is L-lysine 3-hydroxylase of Catenulispora acidiphila (strain DSM 44928 / JCM 14897 / NBRC 102108 / NRRL B-24433 / ID139908).